The following is an 874-amino-acid chain: Alanine--tRNA ligase (874 aa).

Zn(2+) is bound by residues H564, H568, C665, and H669.

It belongs to the class-II aminoacyl-tRNA synthetase family. The cofactor is Zn(2+).

The protein localises to the cytoplasm. The enzyme catalyses tRNA(Ala) + L-alanine + ATP = L-alanyl-tRNA(Ala) + AMP + diphosphate. Catalyzes the attachment of alanine to tRNA(Ala) in a two-step reaction: alanine is first activated by ATP to form Ala-AMP and then transferred to the acceptor end of tRNA(Ala). Also edits incorrectly charged Ser-tRNA(Ala) and Gly-tRNA(Ala) via its editing domain. The chain is Alanine--tRNA ligase from Burkholderia pseudomallei (strain 1106a).